We begin with the raw amino-acid sequence, 141 residues long: Large ribosomal subunit protein bL17 (141 aa).

It belongs to the bacterial ribosomal protein bL17 family. As to quaternary structure, part of the 50S ribosomal subunit. Contacts protein L32.

This Gluconacetobacter diazotrophicus (strain ATCC 49037 / DSM 5601 / CCUG 37298 / CIP 103539 / LMG 7603 / PAl5) protein is Large ribosomal subunit protein bL17.